Consider the following 272-residue polypeptide: Glutamate racemase (272 aa).

Substrate contacts are provided by residues 16-17 (DS) and 48-49 (YG). The Proton donor/acceptor role is filled by Cys79. Substrate is bound at residue 80–81 (NT). Cys191 serves as the catalytic Proton donor/acceptor. 192–193 (TH) provides a ligand contact to substrate.

The protein belongs to the aspartate/glutamate racemases family.

The enzyme catalyses L-glutamate = D-glutamate. It functions in the pathway cell wall biogenesis; peptidoglycan biosynthesis. Its function is as follows. Provides the (R)-glutamate required for cell wall biosynthesis. The chain is Glutamate racemase from Chlorobium phaeobacteroides (strain DSM 266 / SMG 266 / 2430).